The chain runs to 96 residues: Small ribosomal subunit protein bS6 (96 aa).

The protein belongs to the bacterial ribosomal protein bS6 family.

Binds together with bS18 to 16S ribosomal RNA. The chain is Small ribosomal subunit protein bS6 from Beutenbergia cavernae (strain ATCC BAA-8 / DSM 12333 / CCUG 43141 / JCM 11478 / NBRC 16432 / NCIMB 13614 / HKI 0122).